The chain runs to 895 residues: Cellulose 1,4-beta-cellobiosidase (895 aa).

The signal sequence occupies residues 1 to 27; it reads MNFRRMLCAAIVLTIVLSIMLPSTVFA. A CBM-cenC domain is found at 40–199; the sequence is NDLLYERTFD…YLDDVSLYDP (160 aa). The interval 199–240 is linker; the sequence is PRFVKPVEYVLPQPDVRVNQVGYLPFAKKYATVVSSSTSPLK. The catalytic stretch occupies residues 241 to 815; it reads WQLLNSANQV…WVTAYLDEID (575 aa). The active-site Nucleophile is Asp386. Catalysis depends on residues His737, Asp786, and Glu795. The Dockerin domain occupies 828-894; the sequence is PEVIYGDCNG…ILKEIDVLPH (67 aa).

This sequence belongs to the glycosyl hydrolase 9 (cellulase E) family.

Its subcellular location is the secreted. The enzyme catalyses Hydrolysis of (1-&gt;4)-beta-D-glucosidic linkages in cellulose and cellotetraose, releasing cellobiose from the non-reducing ends of the chains.. With respect to regulation, inhibited by cellobiose. This Acetivibrio thermocellus (Hungateiclostridium thermocellum) protein is Cellulose 1,4-beta-cellobiosidase (celK).